The primary structure comprises 69 residues: Consomatin Be1 (69 aa).

An N-terminal signal peptide occupies residues 1-22 (MEMAYWVMVMMMVWITAPLSEG). The propeptide occupies 23-57 (GKLNDVIRALAPDDVTPQFILRSLISRRRSDSDVR). Glutamate 58 is subject to 4-carboxyglutamate. A disulfide bond links cysteine 62 and cysteine 67. Tryptophan 64 carries the D-tryptophan modification. Residues proline 68 and proline 69 each carry the 4-hydroxyproline modification.

Belongs to the conotoxin C superfamily. Consomatin family. Expressed by the venom duct.

It localises to the secreted. Its function is as follows. Moderately activates human somatostatin receptors (SSTR) with a preferential activation of SSTR1 and SSTR4. In vivo, does not cause behavioral changes in mice within a few minutes of intracranial injection, but causes a progressive loss of movement thereafter. Four to five hours after injection, mice recover, even with the highest dose tested. Shows antinociception and antihyperalgesia activities in two mouse models of acute pain, most probably by acting outside the central nervous system. In Conus betulinus (Beech cone), this protein is Consomatin Be1.